Here is a 469-residue protein sequence, read N- to C-terminus: Probable Xaa-Pro aminopeptidase PEPP (469 aa).

Mn(2+)-binding residues include aspartate 264, aspartate 275, glutamate 398, and glutamate 438.

This sequence belongs to the peptidase M24B family. The cofactor is Mn(2+).

It carries out the reaction Release of any N-terminal amino acid, including proline, that is linked to proline, even from a dipeptide or tripeptide.. Functionally, catalyzes the removal of a penultimate prolyl residue from the N-termini of peptides. This Ajellomyces capsulatus (strain G186AR / H82 / ATCC MYA-2454 / RMSCC 2432) (Darling's disease fungus) protein is Probable Xaa-Pro aminopeptidase PEPP (PEPP).